The sequence spans 304 residues: MTQKIKCALIGPGNIGTDLLYKLKRSPFLEPVWMIGIDPESEGLKRAAEMGLKTCATGVDGFLPHVLEDNVQIAFDATSAYVHAENSRKLNALGVLMIDLTPAAIGPFCVPPVNLKEHVGRREMNVNMVTCGGQATIPMVAAVSRVQPVAYGEIVATVSSKSAGPGTRKNIDEFTRTTAGAVEKVGGAKKGKAIIIINPAEPPLVMRDTVHCLTETAPDQAAITESIHAMIKEVQKYVPGYRLVNGPVFDGNRVSVYMEVTGLGDFLPTYAGNLDIMTAAGARTAEMFAEEMIKGTLKLEPVHA.

Catalysis depends on Cys-131, which acts as the Acyl-thioester intermediate. NAD(+)-binding positions include 162–170 (SAGPGTRKN) and Asn-273.

It belongs to the acetaldehyde dehydrogenase family.

The catalysed reaction is acetaldehyde + NAD(+) + CoA = acetyl-CoA + NADH + H(+). The protein is Acetaldehyde dehydrogenase 4 of Dechloromonas aromatica (strain RCB).